The primary structure comprises 470 residues: ATP synthase subunit beta (470 aa).

An ATP-binding site is contributed by 148–155 (GGAGVGKT).

This sequence belongs to the ATPase alpha/beta chains family. As to quaternary structure, F-type ATPases have 2 components, CF(1) - the catalytic core - and CF(0) - the membrane proton channel. CF(1) has five subunits: alpha(3), beta(3), gamma(1), delta(1), epsilon(1). CF(0) has three main subunits: a(1), b(2) and c(9-12). The alpha and beta chains form an alternating ring which encloses part of the gamma chain. CF(1) is attached to CF(0) by a central stalk formed by the gamma and epsilon chains, while a peripheral stalk is formed by the delta and b chains.

It localises to the cell inner membrane. The catalysed reaction is ATP + H2O + 4 H(+)(in) = ADP + phosphate + 5 H(+)(out). In terms of biological role, produces ATP from ADP in the presence of a proton gradient across the membrane. The catalytic sites are hosted primarily by the beta subunits. This Teredinibacter turnerae (strain ATCC 39867 / T7901) protein is ATP synthase subunit beta.